The sequence spans 259 residues: Chloroplastic group IIB intron splicing facilitator CRS2, chloroplastic (259 aa).

The interval M1–P21 is disordered. The N-terminal 49 residues, M1 to V49, are a transit peptide targeting the chloroplast. Position 77 (Y77) interacts with tRNA. H82 serves as the catalytic Proton acceptor. TRNA is bound by residues Y127, N129, and N175.

It belongs to the PTH family. CRS2 subfamily. As to quaternary structure, part of large ribonucleo-protein complexes that include group IIB introns and either CAF1 or CAF2.

The protein localises to the plastid. Its subcellular location is the chloroplast stroma. Required for the splicing of group IIB introns in chloroplasts. The sequence is that of Chloroplastic group IIB intron splicing facilitator CRS2, chloroplastic from Oryza sativa subsp. japonica (Rice).